The sequence spans 611 residues: Chaperone protein DnaK (611 aa).

Threonine 173 carries the phosphothreonine; by autocatalysis modification. Positions 579-592 (AAGQAEGAQGAQDA) are enriched in low complexity. Residues 579 to 598 (AAGQAEGAQGAQDAGAKKDN) form a disordered region.

This sequence belongs to the heat shock protein 70 family.

In terms of biological role, acts as a chaperone. The polypeptide is Chaperone protein DnaK (Bacillus cereus (strain AH187)).